Reading from the N-terminus, the 140-residue chain is Profilin-2 (140 aa).

A2 carries the N-acetylalanine modification.

The protein belongs to the profilin family. In terms of assembly, occurs in many kinds of cells as a complex with monomeric actin in a 1:1 ratio. Interacts with PFN2. Interacts with ACTMAP (via N-terminus); the interaction may facilitate efficient cleavage of the acetylated N-terminus of immature actin by ACTMAP.

It localises to the cytoplasm. The protein resides in the cytoskeleton. Binds to actin and affects the structure of the cytoskeleton. At high concentrations, profilin prevents the polymerization of actin, whereas it enhances it at low concentrations. By binding to PIP2, it inhibits the formation of IP3 and DG. The protein is Profilin-2 (PFN2) of Bos taurus (Bovine).